We begin with the raw amino-acid sequence, 37 residues long: Cytochrome b6-f complex subunit 5 (37 aa).

Residues 5 to 25 form a helical membrane-spanning segment; that stretch reads LLSGIVLGMIPITLAGLFVTA.

It belongs to the PetG family. The 4 large subunits of the cytochrome b6-f complex are cytochrome b6, subunit IV (17 kDa polypeptide, PetD), cytochrome f and the Rieske protein, while the 4 small subunits are PetG, PetL, PetM and PetN. The complex functions as a dimer.

It is found in the plastid. It localises to the chloroplast thylakoid membrane. Functionally, component of the cytochrome b6-f complex, which mediates electron transfer between photosystem II (PSII) and photosystem I (PSI), cyclic electron flow around PSI, and state transitions. PetG is required for either the stability or assembly of the cytochrome b6-f complex. The polypeptide is Cytochrome b6-f complex subunit 5 (Mesostigma viride (Green alga)).